The primary structure comprises 197 residues: MENRELTYITNSIAEAQRVMAAMLADERLLATVRKVADACIASIAQGGKVLLAGNGGSAADAQHIAGEFVSRFAFDRPGLPAVALTTDTSILTAIGNDYGYEKLFSRQVQALGNEGDVLIGYSTSGKSPNILAAFREAKAKGMTCVGFTGNRGGEMRELCDLLLEVPSADTPKIQEGHLVLGHIVCGLVEHSIFGKQ.

The region spanning 40–197 (CIASIAQGGK…LVEHSIFGKQ (158 aa)) is the SIS domain. 55–57 (NGG) is a substrate binding site. H64 and E68 together coordinate Zn(2+). Substrate-binding positions include E68, 97–98 (ND), 123–125 (STS), S128, and Q175. Residues Q175 and H183 each coordinate Zn(2+).

The protein belongs to the SIS family. GmhA subfamily. As to quaternary structure, homotetramer. Requires Zn(2+) as cofactor.

Its subcellular location is the cytoplasm. The enzyme catalyses 2 D-sedoheptulose 7-phosphate = D-glycero-alpha-D-manno-heptose 7-phosphate + D-glycero-beta-D-manno-heptose 7-phosphate. It functions in the pathway carbohydrate biosynthesis; D-glycero-D-manno-heptose 7-phosphate biosynthesis; D-glycero-alpha-D-manno-heptose 7-phosphate and D-glycero-beta-D-manno-heptose 7-phosphate from sedoheptulose 7-phosphate: step 1/1. Its pathway is capsule biogenesis; capsule polysaccharide biosynthesis. Its function is as follows. Catalyzes the isomerization of sedoheptulose 7-phosphate in D-glycero-D-manno-heptose 7-phosphate. This is Phosphoheptose isomerase (gmhA) from Burkholderia pseudomallei (strain K96243).